A 189-amino-acid polypeptide reads, in one-letter code: UPF0398 protein lp_1753 (189 aa).

Belongs to the UPF0398 family.

This Lactiplantibacillus plantarum (strain ATCC BAA-793 / NCIMB 8826 / WCFS1) (Lactobacillus plantarum) protein is UPF0398 protein lp_1753.